Consider the following 190-residue polypeptide: Probable thymidylate kinase (190 aa).

7–14 (GIDGAGKT) lines the ATP pocket.

It belongs to the thymidylate kinase family.

It carries out the reaction dTMP + ATP = dTDP + ADP. This Thermoplasma volcanium (strain ATCC 51530 / DSM 4299 / JCM 9571 / NBRC 15438 / GSS1) protein is Probable thymidylate kinase.